A 399-amino-acid chain; its full sequence is S-adenosylmethionine synthase (399 aa).

Histidine 17 contacts ATP. Aspartate 19 is a Mg(2+) binding site. Glutamate 45 serves as a coordination point for K(+). The L-methionine site is built by glutamate 58 and glutamine 101. Residues 101 to 111 (QSPDIAQGVDE) are flexible loop. ATP is bound by residues 177 to 179 (DAK), 244 to 245 (RF), aspartate 253, 259 to 260 (RK), alanine 276, and lysine 280. Aspartate 253 provides a ligand contact to L-methionine. An L-methionine-binding site is contributed by lysine 284.

It belongs to the AdoMet synthase family. Homotetramer; dimer of dimers. Mg(2+) is required as a cofactor. It depends on K(+) as a cofactor.

It localises to the cytoplasm. It carries out the reaction L-methionine + ATP + H2O = S-adenosyl-L-methionine + phosphate + diphosphate. It participates in amino-acid biosynthesis; S-adenosyl-L-methionine biosynthesis; S-adenosyl-L-methionine from L-methionine: step 1/1. Its function is as follows. Catalyzes the formation of S-adenosylmethionine (AdoMet) from methionine and ATP. The overall synthetic reaction is composed of two sequential steps, AdoMet formation and the subsequent tripolyphosphate hydrolysis which occurs prior to release of AdoMet from the enzyme. The polypeptide is S-adenosylmethionine synthase (Listeria welshimeri serovar 6b (strain ATCC 35897 / DSM 20650 / CCUG 15529 / CIP 8149 / NCTC 11857 / SLCC 5334 / V8)).